The sequence spans 532 residues: Phosphoribosylamine--glycine ligase, chloroplastic (532 aa).

Residues 1–75 (MSSLCASNCY…IQRRLFLLRC (75 aa)) constitute a chloroplast transit peptide. Residues 204 to 412 (KNLCHKYNIP…LAKVLLAACK (209 aa)) form the ATP-grasp domain.

It belongs to the GARS family.

It is found in the plastid. Its subcellular location is the chloroplast. It catalyses the reaction 5-phospho-beta-D-ribosylamine + glycine + ATP = N(1)-(5-phospho-beta-D-ribosyl)glycinamide + ADP + phosphate + H(+). The protein operates within purine metabolism; IMP biosynthesis via de novo pathway; N(1)-(5-phospho-D-ribosyl)glycinamide from 5-phospho-alpha-D-ribose 1-diphosphate: step 2/2. The sequence is that of Phosphoribosylamine--glycine ligase, chloroplastic (PUR2) from Arabidopsis thaliana (Mouse-ear cress).